The primary structure comprises 285 residues: GTP-binding protein 8 (285 aa).

One can recognise an EngB-type G domain in the interval 110–283 (QQPEVCFIGR…KCFIADITGS (174 aa)). Residues 118–125 (GRSNVGKS), 147–151 (GHTKK), 165–168 (DMPG), 227–230 (TKID), and 262–264 (ISA) contribute to the GTP site. Mg(2+)-binding residues include Ser-125 and Thr-149.

It belongs to the TRAFAC class TrmE-Era-EngA-EngB-Septin-like GTPase superfamily. EngB GTPase family. Requires Mg(2+) as cofactor.

This chain is GTP-binding protein 8 (Gtpbp8), found in Mus musculus (Mouse).